The primary structure comprises 115 residues: Large ribosomal subunit protein uL18 (115 aa).

It belongs to the universal ribosomal protein uL18 family. In terms of assembly, part of the 50S ribosomal subunit; part of the 5S rRNA/L5/L18/L25 subcomplex. Contacts the 5S and 23S rRNAs.

In terms of biological role, this is one of the proteins that bind and probably mediate the attachment of the 5S RNA into the large ribosomal subunit, where it forms part of the central protuberance. This Baumannia cicadellinicola subsp. Homalodisca coagulata protein is Large ribosomal subunit protein uL18.